The sequence spans 512 residues: Alpha-amylase (512 aa).

Positions 1-29 (MKQQKRLYARLLTLLFALIFLLPHSAAAA) are cleaved as a signal peptide. Ca(2+) is bound by residues asparagine 133, aspartate 190, alanine 210, aspartate 212, aspartate 223, aspartate 229, aspartate 231, and aspartate 233. Aspartate 190 contacts Na(+). Na(+) is bound by residues aspartate 212, aspartate 223, and aspartate 229. Residue aspartate 260 is the Nucleophile of the active site. Residue histidine 264 participates in Ca(2+) binding. Glutamate 290 acts as the Proton donor in catalysis. Residues glycine 329, tyrosine 331, histidine 435, aspartate 436, and aspartate 459 each coordinate Ca(2+).

It belongs to the glycosyl hydrolase 13 family. Monomer. Requires Ca(2+) as cofactor. The cofactor is Na(+).

The protein resides in the secreted. The catalysed reaction is Endohydrolysis of (1-&gt;4)-alpha-D-glucosidic linkages in polysaccharides containing three or more (1-&gt;4)-alpha-linked D-glucose units.. This is Alpha-amylase (amyS) from Bacillus licheniformis.